The chain runs to 354 residues: tRNA N6-adenosine threonylcarbamoyltransferase (354 aa).

Residues histidine 115 and histidine 119 each coordinate Fe cation. Residues leucine 138–glycine 142, aspartate 171, glycine 184, and asparagine 285 each bind substrate. Aspartate 313 is a binding site for Fe cation.

Belongs to the KAE1 / TsaD family. It depends on Fe(2+) as a cofactor.

Its subcellular location is the cytoplasm. The catalysed reaction is L-threonylcarbamoyladenylate + adenosine(37) in tRNA = N(6)-L-threonylcarbamoyladenosine(37) in tRNA + AMP + H(+). In terms of biological role, required for the formation of a threonylcarbamoyl group on adenosine at position 37 (t(6)A37) in tRNAs that read codons beginning with adenine. Is involved in the transfer of the threonylcarbamoyl moiety of threonylcarbamoyl-AMP (TC-AMP) to the N6 group of A37, together with TsaE and TsaB. TsaD likely plays a direct catalytic role in this reaction. This Albidiferax ferrireducens (strain ATCC BAA-621 / DSM 15236 / T118) (Rhodoferax ferrireducens) protein is tRNA N6-adenosine threonylcarbamoyltransferase.